Reading from the N-terminus, the 126-residue chain is Basic phospholipase A2 1 (126 aa).

A propeptide spanning residues 1-7 (SNRPMPL) is cleaved from the precursor. Disulfide bonds link C18–C78, C33–C125, C35–C51, C50–C106, C57–C99, C67–C92, and C85–C97. Ca(2+)-binding residues include Y34, G36, and G38. Residue H54 is part of the active site. Residue D55 participates in Ca(2+) binding. D100 is a catalytic residue.

It belongs to the phospholipase A2 family. Group I subfamily. D49 sub-subfamily. In terms of assembly, heterodimer formed between two homologous isoforms: isoform 1 and isoform 2. The cofactor is Ca(2+). Expressed by the venom gland.

The protein localises to the secreted. The catalysed reaction is a 1,2-diacyl-sn-glycero-3-phosphocholine + H2O = a 1-acyl-sn-glycero-3-phosphocholine + a fatty acid + H(+). PLA2 catalyzes the calcium-dependent hydrolysis of the 2-acyl groups in 3-sn-phosphoglycerides. This chain is Basic phospholipase A2 1, found in Naja sagittifera (Andaman cobra).